Here is a 1558-residue protein sequence, read N- to C-terminus: Hybrid PKS-NRPS synthetase TAS1 (1558 aa).

The condensation (C) domain stretch occupies residues 27–392; that stretch reads YPMTKAQESL…RGLETPRAQV (366 aa). The tract at residues 522–919 is adenylation (A) domain; sequence TYKELNERSN…TITDVMPEVT (398 aa). Residues 995 to 1028 are disordered; it reads TSGSSSSATPSLVSSGSTTCRSPSTSSCSDSRSA. One can recognise a Carrier domain in the interval 1027–1104; that stretch reads SASPAITSAV…GQVDLLCGSE (78 aa). Residue Ser1063 is modified to O-(pantetheine 4'-phosphoryl)serine. The segment at 1116-1144 is disordered; it reads LGRGRTKSPAKIVDSQGRSSPSTIPSGGR. A compositionally biased stretch (polar residues) spans 1131–1140; that stretch reads QGRSSPSTIP. Residues 1145–1558 enclose the Ketosynthase family 3 (KS3) domain; the sequence is KSEIAIVGIS…GVNAHCVLRS (414 aa). Active-site for beta-ketoacyl synthase activity residues include Cys1308, His1444, and Asn1484.

The protein in the N-terminal section; belongs to the NRP synthetase family. The cofactor is pantetheine 4'-phosphate.

It carries out the reaction acetoacetyl-CoA + L-isoleucine + ATP = tenuazonic acid + AMP + diphosphate + CoA + 2 H(+). Hybrid PKS-NRPS synthetase that mediates the biosynthesis of the toxin tenuazonic acid (TeA), an inhibitor of protein biosynthesis on ribosomes by suppressing the release of new protein. TAS1 alone is sufficient for TeA synthesis via the condensation of isoleucine (Ile) with acetoacetyl-CoA by the N-terminal NRPS module and subsequent cyclization conducted by the C-terminal KS domain. This is Hybrid PKS-NRPS synthetase TAS1 from Gloeophyllum trabeum (strain ATCC 11539 / FP-39264 / Madison 617) (Brown rot fungus).